Reading from the N-terminus, the 406-residue chain is Trk system potassium uptake protein trkA homolog 1 (406 aa).

One can recognise an RCK N-terminal 1 domain in the interval 1 to 124 (MKAVIIGAGE…RAQVGVDLMI (124 aa)). Residues 7–11 (GAGEV), Asp29, 70–71 (TG), and Arg101 each bind NAD(+). Residues 144-225 (IDAEMFAEGK…MEDLESVFGS (82 aa)) enclose the RCK C-terminal domain. One can recognise an RCK N-terminal 2 domain in the interval 230-348 (RTRILLIGCG…FEMVGIDMAV (119 aa)). 232–262 (RILLIGCGIVGMYLAKLIDKEENADLRIIEH) contributes to the NAD(+) binding site.

Its function is as follows. Part of a potassium transport system. The protein is Trk system potassium uptake protein trkA homolog 1 (trkA1) of Methanosarcina mazei (Methanosarcina frisia).